We begin with the raw amino-acid sequence, 194 residues long: UPF0301 protein BQ03640 (194 aa).

It belongs to the UPF0301 (AlgH) family.

This Bartonella quintana (strain Toulouse) (Rochalimaea quintana) protein is UPF0301 protein BQ03640.